A 432-amino-acid polypeptide reads, in one-letter code: Gamma-glutamyl phosphate reductase (432 aa).

It belongs to the gamma-glutamyl phosphate reductase family.

It is found in the cytoplasm. The enzyme catalyses L-glutamate 5-semialdehyde + phosphate + NADP(+) = L-glutamyl 5-phosphate + NADPH + H(+). Its pathway is amino-acid biosynthesis; L-proline biosynthesis; L-glutamate 5-semialdehyde from L-glutamate: step 2/2. In terms of biological role, catalyzes the NADPH-dependent reduction of L-glutamate 5-phosphate into L-glutamate 5-semialdehyde and phosphate. The product spontaneously undergoes cyclization to form 1-pyrroline-5-carboxylate. The chain is Gamma-glutamyl phosphate reductase from Brachyspira hyodysenteriae (strain ATCC 49526 / WA1).